Reading from the N-terminus, the 234-residue chain is Glucosamine-6-phosphate deaminase (234 aa).

The active-site Proton acceptor; for enolization step is the Asp63. The For ring-opening step role is filled by Asn129. His131 serves as the catalytic Proton acceptor; for ring-opening step. Glu136 (for ring-opening step) is an active-site residue.

It belongs to the glucosamine/galactosamine-6-phosphate isomerase family. NagB subfamily.

It carries out the reaction alpha-D-glucosamine 6-phosphate + H2O = beta-D-fructose 6-phosphate + NH4(+). It functions in the pathway amino-sugar metabolism; N-acetylneuraminate degradation; D-fructose 6-phosphate from N-acetylneuraminate: step 5/5. Functionally, catalyzes the reversible isomerization-deamination of glucosamine 6-phosphate (GlcN6P) to form fructose 6-phosphate (Fru6P) and ammonium ion. The sequence is that of Glucosamine-6-phosphate deaminase from Listeria innocua serovar 6a (strain ATCC BAA-680 / CLIP 11262).